The chain runs to 292 residues: MTTETTTATATAKIPAPATPYQEDIARYWNNEARPVNLRLGDVDGLYHHHYGIGPVDRAALGDPEHSEYEKKVIAELHRLESAQAEFLMDHLGQAGPDDTLVDAGCGRGGSMVMAHRRFGSRVEGVTLSAAQADFGNRRARELRIDDHVRSRVCNMLDTPFDKGAVTASWNNESTMYVDLHDLFSEHSRFLKVGGRYVTITGCWNPRYGQPSKWVSQINAHFECNIHSRREYLRAMADNRLVPHTIVDLTPDTLPYWELRATSSLVTGIEKAFIESYRDGSFQYVLIAADRV.

The protein belongs to the geranyl diphosphate 2-C-methyltransferase family. The cofactor is Mg(2+).

It carries out the reaction (2E)-geranyl diphosphate + S-adenosyl-L-methionine = (E)-2-methylgeranyl diphosphate + S-adenosyl-L-homocysteine + H(+). Functionally, catalyzes the SAM-dependent methylation of geranyl diphosphate (GPP) to yield (E)-2-methylgeranyl diphosphate (2-MeGPP). The chain is Geranyl diphosphate 2-C-methyltransferase from Streptomyces coelicolor (strain ATCC BAA-471 / A3(2) / M145).